We begin with the raw amino-acid sequence, 89 residues long: Cell division protein FtsL (89 aa).

Residues 1–6 (MAMNKL) lie on the Cytoplasmic side of the membrane. Residues 7–24 (NFLLLLAVCVSAFSVVMQ) form a helical membrane-spanning segment. The Periplasmic portion of the chain corresponds to 25-89 (QNQYRLNFTA…GNTFMVEHQR (65 aa)). The stretch at 33-73 (TALDKAKKQEIALEQDYAQMRLQQARLANHEAIRAAAEKQN) forms a coiled coil.

The protein belongs to the FtsL family. As to quaternary structure, part of a complex composed of FtsB, FtsL and FtsQ.

It is found in the cell inner membrane. Functionally, essential cell division protein. May link together the upstream cell division proteins, which are predominantly cytoplasmic, with the downstream cell division proteins, which are predominantly periplasmic. The sequence is that of Cell division protein FtsL from Neisseria meningitidis serogroup B (strain ATCC BAA-335 / MC58).